A 371-amino-acid chain; its full sequence is 4-hydroxybenzoate polyprenyltransferase, mitochondrial (371 aa).

The transit peptide at Met-1–Pro-45 directs the protein to the mitochondrion. Residues Ser-46–Pro-83 lie on the Mitochondrial matrix side of the membrane. A helical membrane pass occupies residues Ile-84–Gly-104. The Mitochondrial intermembrane portion of the chain corresponds to Cys-105–Asp-108. Residues Trp-109–Ile-129 traverse the membrane as a helical segment. The Mitochondrial matrix segment spans residues Asn-130–Leu-171. A helical membrane pass occupies residues Gly-172–Val-192. Residues Thr-193–Arg-200 lie on the Mitochondrial intermembrane side of the membrane. A helical membrane pass occupies residues Ile-201–Trp-221. Topologically, residues Ser-222–Ser-231 are mitochondrial matrix. Residues Val-232–Ala-252 traverse the membrane as a helical segment. Residues His-253–Lys-277 lie on the Mitochondrial intermembrane side of the membrane. The chain crosses the membrane as a helical span at residues Trp-278–Gly-298. At Gln-299–Thr-300 the chain is on the mitochondrial matrix side. A helical membrane pass occupies residues Met-301 to Leu-321. The Mitochondrial intermembrane portion of the chain corresponds to Asp-322–Lys-332. The helical transmembrane segment at Phe-333–Cys-353 threads the bilayer. Residues Lys-354–Asn-371 are Mitochondrial matrix-facing.

It belongs to the UbiA prenyltransferase family. Mg(2+) is required as a cofactor.

It localises to the mitochondrion inner membrane. It carries out the reaction an all-trans-polyprenyl diphosphate + 4-hydroxybenzoate = a 4-hydroxy-3-(all-trans-polyprenyl)benzoate + diphosphate. It catalyses the reaction all-trans-decaprenyl diphosphate + 4-hydroxybenzoate = 4-hydroxy-3-(all-trans-decaprenyl)benzoate + diphosphate. The catalysed reaction is all-trans-nonaprenyl diphosphate + 4-hydroxybenzoate = 4-hydroxy-3-(all-trans-nonaprenyl)benzoate + diphosphate. It participates in cofactor biosynthesis; ubiquinone biosynthesis. Mediates the second step in the final reaction sequence of coenzyme Q (CoQ) biosynthesis. Catalyzes the prenylation of para-hydroxybenzoate (PHB) with an all-trans polyprenyl donor (such as all-trans-decaprenyl diphosphate). The length of the polyprenyl side chain varies depending on the species, in humans, the side chain is comprised of 10 isoprenyls (decaprenyl) producing CoQ10 (also known as ubiquinone), whereas rodents predominantly generate CoQ9. However, this specificity is not complete, human tissues have low amounts of CoQ9 and rodent organs contain some CoQ10. Plays a central role in the biosynthesis of CoQ10. CoQ10 is a vital molecule that transports electrons from mitochondrial respiratory chain complexes. CoQs also function as cofactors for uncoupling protein and play a role as regulators of the extracellularly-induced ceramide-dependent apoptotic pathway. Regulates mitochondrial permeability transition pore (mPTP) opening and ROS production (pivotal events in cell death) in a tissue specific manner. This chain is 4-hydroxybenzoate polyprenyltransferase, mitochondrial, found in Bos taurus (Bovine).